Consider the following 283-residue polypeptide: Small ribosomal subunit protein uS3 (283 aa).

The KH type-2 domain occupies 39-107 (VRAYLKTKLK…PVHVNIEEIR (69 aa)). The tract at residues 219-283 (ASDDDKKRRG…AAVSAEKAGE (65 aa)) is disordered. Residues 221–236 (DDDKKRRGPRRDDGKP) are compositionally biased toward basic and acidic residues. Positions 237-260 (SGRPRAPRPEGQPGAAAPGSAPAA) are enriched in low complexity.

The protein belongs to the universal ribosomal protein uS3 family. In terms of assembly, part of the 30S ribosomal subunit. Forms a tight complex with proteins S10 and S14.

Functionally, binds the lower part of the 30S subunit head. Binds mRNA in the 70S ribosome, positioning it for translation. The chain is Small ribosomal subunit protein uS3 from Janthinobacterium sp. (strain Marseille) (Minibacterium massiliensis).